The chain runs to 137 residues: Large-conductance mechanosensitive channel (137 aa).

Helical transmembrane passes span 10-30 and 76-96; these read FAMRGNVVDLAVGVIIGAAFG and GVFIQNVFDFVIVAFAIFVAI.

It belongs to the MscL family. Homopentamer.

The protein localises to the cell inner membrane. Its function is as follows. Channel that opens in response to stretch forces in the membrane lipid bilayer. May participate in the regulation of osmotic pressure changes within the cell. This chain is Large-conductance mechanosensitive channel, found in Salmonella typhimurium (strain LT2 / SGSC1412 / ATCC 700720).